The chain runs to 608 residues: DNA ligase (608 aa).

Glutamate 266 contributes to the ATP binding site. Lysine 268 serves as the catalytic N6-AMP-lysine intermediate. Residues arginine 273, arginine 288, glutamate 318, phenylalanine 358, arginine 435, and lysine 441 each coordinate ATP.

It belongs to the ATP-dependent DNA ligase family. It depends on Mg(2+) as a cofactor. Mn(2+) is required as a cofactor.

The enzyme catalyses ATP + (deoxyribonucleotide)n-3'-hydroxyl + 5'-phospho-(deoxyribonucleotide)m = (deoxyribonucleotide)n+m + AMP + diphosphate.. It carries out the reaction ADP + (deoxyribonucleotide)n-3'-hydroxyl + 5'-phospho-(deoxyribonucleotide)m = (deoxyribonucleotide)n+m + AMP + phosphate.. It catalyses the reaction GTP + (deoxyribonucleotide)n-3'-hydroxyl + 5'-phospho-(deoxyribonucleotide)m = (deoxyribonucleotide)n+m + GMP + diphosphate.. In terms of biological role, DNA ligase that seals nicks in double-stranded DNA during DNA replication, DNA recombination and DNA repair. Can use ATP, ADP and GTP, but not CTP, TTP or NAD(+). The protein is DNA ligase of Hyperthermus butylicus (strain DSM 5456 / JCM 9403 / PLM1-5).